The chain runs to 90 residues: Barstar (90 aa).

Belongs to the barstar family.

It is found in the cytoplasm. Functionally, inhibitor of the ribonuclease barnase. Forms a one-to-one non-covalent complex. The protein is Barstar of Bacillus amyloliquefaciens (Bacillus velezensis).